A 472-amino-acid chain; its full sequence is MAQGSGDQRAVGVADPEESSPNMIVYCKIEDIITKMQDDKTGGVPIRTVKSFLSKIPSVVTGTDIVQWLMKNLSIEDPVEAIHLGSLIAAQGYIFPISDHVLTMKDDGTFYRFQAPYFWPSNCWEPENTDYAIYLCKRTMQNKARLELADYEAENLARLQRAFARKWEFIFMQAEAQVKIDRKKDKTERKILDSQERAFWDVHRPVPGCVNTTEMDIRKCRRLKNPQKVKKSVYGVTEESQAQSPVHVLSQPIRKTTKEDIRKQITFLNAQIDRHCLKMSKVAESLIAYTEQYVEYDPLITPAEPSNPWISDDVALWDIEMSKEPSQQRVKRWGFSFDEILKDQVGRDQFLRFLESEFSSENLRFWLAVQDLKKQPLQDVAKRVEEIWQEFLAPGAPSAINLDSHSYEITSQNVKDGGRYTFEDAQEHIYKLMKSDSYARFLRSNAYQDLLLAKKKGKSLAGKRLTGLMQSS.

The DEP domain occupies 40 to 115 (KTGGVPIRTV…DDGTFYRFQA (76 aa)). The G protein gamma domain maps to 261–330 (IRKQITFLNA…MSKEPSQQRV (70 aa)). Positions 336 to 441 (SFDEILKDQV…LMKSDSYARF (106 aa)) constitute an RGS domain.

In terms of assembly, interacts with GNB5. Interacts with RGS7BP, leading to regulate the subcellular location of the heterodimer formed with GNB5. Interacts with GNAI1.

It is found in the cytoplasm. Its subcellular location is the cytosol. The protein resides in the membrane. It localises to the nucleus. The protein localises to the cell membrane. Functionally, regulates G protein-coupled receptor signaling cascades. Inhibits signal transduction by increasing the GTPase activity of G protein alpha subunits, thereby driving them into their inactive GDP-bound form. The RGS6/GNB5 dimer enhances GNAO1 GTPase activity. The chain is Regulator of G-protein signaling 6 (RGS6) from Homo sapiens (Human).